The primary structure comprises 206 residues: Protein-methionine-sulfoxide reductase heme-binding subunit MsrQ (206 aa).

Helical transmembrane passes span 7–27 (IIIH…LLSG), 43–63 (FLGF…KVFY), 77–97 (LGLW…ALEL), 112–132 (GYLI…LSSW), 142–162 (WWFY…IHYV), and 172–192 (SMLY…GLFI).

This sequence belongs to the MsrQ family. Heterodimer of a catalytic subunit (MsrP) and a heme-binding subunit (MsrQ). Requires FMN as cofactor. Heme b serves as cofactor.

It localises to the cell inner membrane. Its function is as follows. Part of the MsrPQ system that repairs oxidized periplasmic proteins containing methionine sulfoxide residues (Met-O), using respiratory chain electrons. Thus protects these proteins from oxidative-stress damage caused by reactive species of oxygen and chlorine generated by the host defense mechanisms. MsrPQ is essential for the maintenance of envelope integrity under bleach stress, rescuing a wide series of structurally unrelated periplasmic proteins from methionine oxidation. MsrQ provides electrons for reduction to the reductase catalytic subunit MsrP, using the quinone pool of the respiratory chain. This Pasteurella multocida (strain Pm70) protein is Protein-methionine-sulfoxide reductase heme-binding subunit MsrQ.